The primary structure comprises 192 residues: Imidazoleglycerol-phosphate dehydratase (192 aa).

The protein belongs to the imidazoleglycerol-phosphate dehydratase family.

The protein resides in the cytoplasm. The enzyme catalyses D-erythro-1-(imidazol-4-yl)glycerol 3-phosphate = 3-(imidazol-4-yl)-2-oxopropyl phosphate + H2O. It functions in the pathway amino-acid biosynthesis; L-histidine biosynthesis; L-histidine from 5-phospho-alpha-D-ribose 1-diphosphate: step 6/9. The chain is Imidazoleglycerol-phosphate dehydratase from Staphylococcus epidermidis (strain ATCC 12228 / FDA PCI 1200).